We begin with the raw amino-acid sequence, 60 residues long: Large ribosomal subunit protein bL32 (60 aa).

A disordered region spans residues methionine 1 to phenylalanine 47. Residues arginine 7 to arginine 16 are compositionally biased toward basic residues.

The protein belongs to the bacterial ribosomal protein bL32 family.

The polypeptide is Large ribosomal subunit protein bL32 (Teredinibacter turnerae (strain ATCC 39867 / T7901)).